The chain runs to 146 residues: Probable calcium-binding protein CML40 (146 aa).

The region spanning 7 to 42 (NKRDEYQRVFSCFDKSHQGKVSVSTIERCVDAIKSG) is the EF-hand 1 domain. The interval 44-65 (RAVVDQEDTTNPNPEESTDDKS) is disordered. Residues 116–146 (KSLKDCEVMISQFDINRDGIINFDEFRAMMQ) form the EF-hand 2 domain. 4 residues coordinate Ca(2+): Asp129, Asn131, Asp133, and Glu140.

Potential calcium sensor. The protein is Probable calcium-binding protein CML40 (CML40) of Arabidopsis thaliana (Mouse-ear cress).